The following is a 351-amino-acid chain: Glycerol-1-phosphate dehydrogenase [NAD(P)+] (351 aa).

NAD(+)-binding positions include 97-101 and 119-122; these read GKVID and TSPS. Position 124 (Asp-124) interacts with substrate. Ser-128 contributes to the NAD(+) binding site. Asp-171 contacts substrate. Positions 171 and 251 each coordinate Zn(2+). His-255 provides a ligand contact to substrate. Residue His-267 participates in Zn(2+) binding.

The protein belongs to the glycerol-1-phosphate dehydrogenase family. In terms of assembly, homodimer. Zn(2+) is required as a cofactor.

It is found in the cytoplasm. The catalysed reaction is sn-glycerol 1-phosphate + NAD(+) = dihydroxyacetone phosphate + NADH + H(+). The enzyme catalyses sn-glycerol 1-phosphate + NADP(+) = dihydroxyacetone phosphate + NADPH + H(+). It functions in the pathway membrane lipid metabolism; glycerophospholipid metabolism. In terms of biological role, catalyzes the NAD(P)H-dependent reduction of dihydroxyacetonephosphate (DHAP or glycerone phosphate) to glycerol 1-phosphate (G1P). The G1P thus generated is used as the glycerophosphate backbone of phospholipids in the cellular membranes of Archaea. The polypeptide is Glycerol-1-phosphate dehydrogenase [NAD(P)+] (Saccharolobus islandicus (strain M.16.27) (Sulfolobus islandicus)).